Here is a 531-residue protein sequence, read N- to C-terminus: Beta-hexosaminidase subunit beta (531 aa).

Positions 1-21 (MEVLPGLLRLLAALVVAERWA) are cleaved as a signal peptide. C67 and C111 are joined by a disulfide. N-linked (GlcNAc...) asparagine glycosylation is found at N120, N164, and N301. 2 disulfides stabilise this stretch: C283/C334 and C508/C525. The Proton donor role is filled by E329.

This sequence belongs to the glycosyl hydrolase 20 family. In terms of assembly, there are 3 forms of beta-hexosaminidase: hexosaminidase A is a heterodimer composed of one subunit alpha and one subunit beta (chain A and B); hexosaminidase B is a homodimer of two beta subunits (two chains A and B); hexosaminidase S is a homodimer of two alpha subunits. The composition of the dimer (isozyme A versus isozyme S) has a significant effect on the substrate specificity of the alpha subunit active site.

The protein resides in the lysosome. It localises to the cytoplasmic vesicle. It is found in the secretory vesicle. The protein localises to the cortical granule. The catalysed reaction is Hydrolysis of terminal non-reducing N-acetyl-D-hexosamine residues in N-acetyl-beta-D-hexosaminides.. The enzyme catalyses N-acetyl-beta-D-galactosaminyl-(1-&gt;4)-beta-D-3-sulfogalactosyl-(1-&gt;4)-beta-D-glucosyl-(1&lt;-&gt;1')-ceramide + H2O = a beta-D-3-sulfogalactosyl-(1-&gt;4)-beta-D-glucosyl-(1&lt;-&gt;1')-ceramide + N-acetyl-beta-D-galactosamine. It catalyses the reaction a ganglioside GM2 (d18:1(4E)) + H2O = a ganglioside GM3 (d18:1(4E)) + N-acetyl-beta-D-galactosamine. It carries out the reaction a ganglioside GM2 + H2O = a ganglioside GM3 + N-acetyl-beta-D-galactosamine. The catalysed reaction is beta-D-GalNAc-(1-&gt;4)-alpha-L-IdoA-(1-&gt;3)-beta-D-GalNAc-4-sulfate-(1-&gt;4)-alpha-L-IdoA-(1-&gt;3)-D-GalNAc-4-sulfate + H2O = alpha-L-IdoA-(1-&gt;3)-beta-D-GalNAc-4-sulfate-(1-&gt;4)-alpha-L-IdoA-(1-&gt;3)-D-GalNAc-4-sulfate + N-acetyl-D-galactosamine. The enzyme catalyses N-acetyl-beta-D-6-sulfogalactosaminyl-(1-&gt;4)-alpha-L-iduronyl-(1-&gt;3)-N-acetyl-D-6-sulfogalactosamine + H2O = alpha-L-iduronyl-(1-&gt;3)-N-acetyl-D-6-sulfogalactosamine + N-acetyl-D-6-sulfogalactosamine. Its activity is regulated as follows. Addition of GM2A stimulates the hydrolysis of sulfated glycosphingolipid SM2 and the ganglioside GM2. Hydrolyzes the non-reducing end N-acetyl-D-hexosamine and/or sulfated N-acetyl-D-hexosamine of glycoconjugates, such as the oligosaccharide moieties from proteins and neutral glycolipids, or from certain mucopolysaccharides. The isozyme B does not hydrolyze each of these substrates, however hydrolyzes efficiently neutral oligosaccharide. Only the isozyme A is responsible for the degradation of GM2 gangliosides in the presence of GM2A. During fertilization is responsible, at least in part, for the zona block to polyspermy. Present in the cortical granules of non-activated oocytes, is exocytosed during the cortical reaction in response to oocyte activation and inactivates the sperm galactosyltransferase-binding site, accounting for the block in sperm binding to the zona pellucida. The protein is Beta-hexosaminidase subunit beta of Sus scrofa (Pig).